A 185-amino-acid chain; its full sequence is Putative RNA (cytidine(34)-2'-O)-methyltransferase (185 aa).

Residues I80, G105, and I126 each contribute to the S-adenosyl-L-methionine site.

The protein belongs to the class IV-like SAM-binding methyltransferase superfamily. RNA methyltransferase TrmH family. TrmL subfamily.

It is found in the cytoplasm. It catalyses the reaction cytidine(34) in tRNA + S-adenosyl-L-methionine = 2'-O-methylcytidine(34) in tRNA + S-adenosyl-L-homocysteine + H(+). The catalysed reaction is 5-carboxymethylaminomethyluridine(34) in tRNA(Leu) + S-adenosyl-L-methionine = 5-carboxymethylaminomethyl-2'-O-methyluridine(34) in tRNA(Leu) + S-adenosyl-L-homocysteine + H(+). In terms of biological role, could methylate the ribose at the nucleotide 34 wobble position in tRNA. The sequence is that of Putative RNA (cytidine(34)-2'-O)-methyltransferase from Lactobacillus gasseri (strain ATCC 33323 / DSM 20243 / BCRC 14619 / CIP 102991 / JCM 1131 / KCTC 3163 / NCIMB 11718 / NCTC 13722 / AM63).